The chain runs to 198 residues: Phosphoheptose isomerase (198 aa).

An SIS domain is found at 40 to 198; the sequence is IIGALRGGHK…IEAALMQDAR (159 aa). 55–57 serves as a coordination point for substrate; sequence NGG. Zn(2+) contacts are provided by His64 and Glu68. Substrate is bound by residues Glu68, 97–98, 123–125, Ser128, and Gln175; these read ND and STS. Residues Gln175 and His183 each coordinate Zn(2+).

It belongs to the SIS family. GmhA subfamily. As to quaternary structure, homotetramer. Zn(2+) is required as a cofactor.

The protein localises to the cytoplasm. It catalyses the reaction 2 D-sedoheptulose 7-phosphate = D-glycero-alpha-D-manno-heptose 7-phosphate + D-glycero-beta-D-manno-heptose 7-phosphate. It participates in carbohydrate biosynthesis; D-glycero-D-manno-heptose 7-phosphate biosynthesis; D-glycero-alpha-D-manno-heptose 7-phosphate and D-glycero-beta-D-manno-heptose 7-phosphate from sedoheptulose 7-phosphate: step 1/1. Catalyzes the isomerization of sedoheptulose 7-phosphate in D-glycero-D-manno-heptose 7-phosphate. This chain is Phosphoheptose isomerase, found in Bradyrhizobium sp. (strain ORS 278).